Consider the following 111-residue polypeptide: 2Fe-2S ferredoxin (111 aa).

In terms of domain architecture, 2Fe-2S ferredoxin-type spans 1-104; it reads MPKVLFLPHK…DIEVEIPLYN (104 aa). [2Fe-2S] cluster is bound by residues Cys-42, Cys-48, Cys-51, and Cys-87.

The protein belongs to the adrenodoxin/putidaredoxin family. The cofactor is [2Fe-2S] cluster.

Functionally, ferredoxin are iron-sulfur proteins that transfer electrons in a wide variety of metabolic reactions. In Buchnera aphidicola subsp. Acyrthosiphon pisum (strain APS) (Acyrthosiphon pisum symbiotic bacterium), this protein is 2Fe-2S ferredoxin (fdx).